Reading from the N-terminus, the 277-residue chain is Small ribosomal subunit protein uS3 (277 aa).

Residues 43-111 enclose the KH type-2 domain; sequence IRQLMSTGME…QVQLNILEVK (69 aa). Residues 218–228 show a composition bias toward low complexity; the sequence is QQAAAAPSRGR. The disordered stretch occupies residues 218-277; it reads QQAAAAPSRGRGASDRPGRPGGADRGDRRRRTDRPAAEAAPAAEAPAVEAAAPAVEGGQA. Residues 229–244 show a composition bias toward basic and acidic residues; the sequence is GASDRPGRPGGADRGD. Over residues 254-277 the composition is skewed to low complexity; that stretch reads AEAAPAAEAPAVEAAAPAVEGGQA.

It belongs to the universal ribosomal protein uS3 family. In terms of assembly, part of the 30S ribosomal subunit. Forms a tight complex with proteins S10 and S14.

In terms of biological role, binds the lower part of the 30S subunit head. Binds mRNA in the 70S ribosome, positioning it for translation. The sequence is that of Small ribosomal subunit protein uS3 from Arthrobacter sp. (strain FB24).